The following is a 315-amino-acid chain: N-acetyl-D-glutamate racemase (315 aa).

3 residues coordinate Mg(2+): aspartate 147, glutamate 173, and aspartate 196.

This sequence belongs to the mandelate racemase/muconate lactonizing enzyme family. Mg(2+) serves as cofactor.

It carries out the reaction N-acetyl-D-glutamate = N-acetyl-L-glutamate. The protein operates within amino-acid degradation. Its function is as follows. Racemase involved in a deamination-independent D-glutamate degradation pathway, named the DgcN-DgcA pathway. Catalyzes the conversion of N-acetyl-D-glutamate to N-acetyl-L-glutamate. Also shows racemase activity towards the dipeptide L-Ala-D-Glu, a key constituent of peptidoglycan muropeptides, suggesting that it may also contribute to the degradation of peptidoglycans. This Pseudoalteromonas sp protein is N-acetyl-D-glutamate racemase.